Here is a 387-residue protein sequence, read N- to C-terminus: Ubiquitin-conjugating enzyme E2 25 (387 aa).

Residues 117–164 (APPVRDDIDEGRGSDISDTTSEPIDDDMAGDGEVDDDDEEEEDDEDAD) are disordered. Positions 120 to 131 (VRDDIDEGRGSD) are enriched in basic and acidic residues. Over residues 139–164 (PIDDDMAGDGEVDDDDEEEEDDEDAD) the composition is skewed to acidic residues. Residues 214 to 380 (TATDRLMKEI…QQIHAKSGWY (167 aa)) form the UBC core domain. Cys315 functions as the Glycyl thioester intermediate in the catalytic mechanism.

It belongs to the ubiquitin-conjugating enzyme family. In terms of tissue distribution, in the embryo, expressed in precursor neuron and muscle cells and in other cells such as hypodermal cells. After hatching of L1 larvae and in all subsequent stages, strongest expression in pharyngeal muscle and anal muscle cells. In L4 larvae and adolescent hermaphrodites, also expressed in the vulval muscles. Expression also detected in all four nerve cords and in neurons with weaker levels in all body wall muscles.

Its subcellular location is the cytoplasm. It is found in the nucleus. It catalyses the reaction S-ubiquitinyl-[E1 ubiquitin-activating enzyme]-L-cysteine + [E2 ubiquitin-conjugating enzyme]-L-cysteine = [E1 ubiquitin-activating enzyme]-L-cysteine + S-ubiquitinyl-[E2 ubiquitin-conjugating enzyme]-L-cysteine.. Its pathway is protein modification; protein ubiquitination. Functionally, catalyzes the covalent attachment of ubiquitin to other proteins (Potential). Required for the maintenance of neuromuscular function. The sequence is that of Ubiquitin-conjugating enzyme E2 25 from Caenorhabditis elegans.